The chain runs to 119 residues: Large ribosomal subunit protein uL24 (119 aa).

Belongs to the universal ribosomal protein uL24 family. Part of the 50S ribosomal subunit.

Its function is as follows. One of two assembly initiator proteins, it binds directly to the 5'-end of the 23S rRNA, where it nucleates assembly of the 50S subunit. In terms of biological role, one of the proteins that surrounds the polypeptide exit tunnel on the outside of the subunit. This chain is Large ribosomal subunit protein uL24, found in Clavibacter sepedonicus (Clavibacter michiganensis subsp. sepedonicus).